Reading from the N-terminus, the 295-residue chain is GTPase Era (295 aa).

The Era-type G domain maps to 3–170 (KSGFVTIVGR…VDLMKTELPE (168 aa)). Residues 11-18 (GRPNVGKS) form a G1 region. 11-18 (GRPNVGKS) is a binding site for GTP. Positions 37-41 (QTTRN) are G2. The tract at residues 58 to 61 (DTPG) is G3. Residues 58 to 62 (DTPGI) and 120 to 123 (NKID) contribute to the GTP site. Positions 120–123 (NKID) are G4. The interval 149 to 151 (IAA) is G5. In terms of domain architecture, KH type-2 spans 201-278 (LRDEVPHGIA…NVKIWVKVRK (78 aa)).

The protein belongs to the TRAFAC class TrmE-Era-EngA-EngB-Septin-like GTPase superfamily. Era GTPase family. Monomer.

The protein resides in the cytoplasm. It is found in the cell membrane. Functionally, an essential GTPase that binds both GDP and GTP, with rapid nucleotide exchange. Plays a role in 16S rRNA processing and 30S ribosomal subunit biogenesis and possibly also in cell cycle regulation and energy metabolism. In Clostridium botulinum (strain Eklund 17B / Type B), this protein is GTPase Era.